We begin with the raw amino-acid sequence, 503 residues long: Surface lipoprotein assembly modifier (503 aa).

The N-terminal stretch at 1 to 34 (MTITPVYTTFTPTKTPIKFFMAGLTFLIAHISHA) is a signal peptide. The N-terminal domain stretch occupies residues 38 to 220 (RTDNQEPINQ…QYRQALKQRD (183 aa)). One copy of the TPR repeat lies at 136 to 169 (ILLGYANALAALDKGNAKKAIDELRRIIAIMPEY). Positions 221–503 (SWTWQVGMNL…QMFVEFSRIF (283 aa)) are C-terminal probable beta barrel. 14 beta stranded membrane passes run 222–232 (WTWQVGMNLAK), 259–270 (LSYQLGADKKWS), 275–285 (AYVGANAQIYG), 299–308 (GRLGANLGFA), 313–322 (DLSIETYGEK), 334–343 (IGIRMSVDYR), 348–358 (FQSLNAIDISR), 372–382 (TLYSTSLIYYP), 387–396 (YYLLGADFYD), 410–419 (RGIRTAWGQE), 424–434 (LSSRAQISINK), 454–463 (MQASLSLWHR), 470–479 (ITPRLTISTN), and 493–503 (NQMFVEFSRIF).

It belongs to the Slam family.

It localises to the cell outer membrane. Required for correct export to the cell surface of some cell outer membrane lipoproteins (tested with TpbP) upon heterologous expression in E.coli and probably also in Moraxella. This is Surface lipoprotein assembly modifier from Moraxella catarrhalis (Branhamella catarrhalis).